A 459-amino-acid chain; its full sequence is ATP-dependent protease ATPase subunit HslU (459 aa).

ATP contacts are provided by residues Val26, 68–73 (GVGKTE), Asp271, Glu337, and Arg409.

Belongs to the ClpX chaperone family. HslU subfamily. As to quaternary structure, a double ring-shaped homohexamer of HslV is capped on each side by a ring-shaped HslU homohexamer. The assembly of the HslU/HslV complex is dependent on binding of ATP.

Its subcellular location is the cytoplasm. ATPase subunit of a proteasome-like degradation complex; this subunit has chaperone activity. The binding of ATP and its subsequent hydrolysis by HslU are essential for unfolding of protein substrates subsequently hydrolyzed by HslV. HslU recognizes the N-terminal part of its protein substrates and unfolds these before they are guided to HslV for hydrolysis. The protein is ATP-dependent protease ATPase subunit HslU of Xylella fastidiosa (strain 9a5c).